Consider the following 221-residue polypeptide: Max dimerization protein 1 (221 aa).

The short motif at 21-49 (RREREAEHGYASMLPYNSKERDGLKRKSK) is the Nuclear localization signal element. Disordered regions lie at residues 28-67 (HGYASMLPYNSKERDGLKRKSKSKKSSNSRSTHNEMEKNR) and 176-202 (DWSSSSSSVSDLDERGSMQSICSDEGY). The bHLH domain maps to 55-107 (NSRSTHNEMEKNRRAHLRLCLEKLKILVPLGPESNRHTTLSLLTRAKSHIKKL). Polar residues predominate over residues 192 to 202 (SMQSICSDEGY).

In terms of assembly, efficient DNA binding requires dimerization with another bHLH protein. Binds DNA as a heterodimer with MAX.

Its subcellular location is the nucleus. Functionally, transcriptional repressor. MAD binds with MAX to form a sequence-specific DNA-binding protein complex which recognizes the core sequence 5'-CAC[GA]TG-3'. MAD thus antagonizes MYC transcriptional activity by competing for MAX. In Xenopus tropicalis (Western clawed frog), this protein is Max dimerization protein 1 (mxd1).